The sequence spans 242 residues: Placenta-expressed transcript 1 protein (242 aa).

Residues 1 to 26 (MAILRSLLLPLGLLLCLWLLCSPASC) form the signal peptide. The Extracellular portion of the chain corresponds to 27 to 220 (TNSTTNCKPF…TTHKSSANRA (194 aa)). N-linked (GlcNAc...) asparagine glycans are attached at residues N28, N81, and N106. The tract at residues 162–209 (VITTPTHKPTPAPPKPTTNPQKTTTNHSIPTTSLPKPTTSLYTSHPKL) is disordered. The span at 169 to 178 (KPTPAPPKPT) shows a compositional bias: pro residues. The span at 179–205 (TNPQKTTTNHSIPTTSLPKPTTSLYTS) shows a compositional bias: low complexity. A helical membrane pass occupies residues 221 to 241 (FLCPVREAIQILFIFLIGTLL). Residue F242 is a topological domain, cytoplasmic.

N-glycosylated.

It is found in the membrane. The protein localises to the apical cell membrane. Modulates leading keratinocyte migration and cellular adhesion to matrix proteins during a wound-healing response and promotes wound repair. May play a role during trichilemmal differentiation of the hair follicle. In Bos taurus (Bovine), this protein is Placenta-expressed transcript 1 protein (PLET1).